The sequence spans 133 residues: UPF0146 protein MTH_1000 (133 aa).

It belongs to the UPF0146 family.

The chain is UPF0146 protein MTH_1000 from Methanothermobacter thermautotrophicus (strain ATCC 29096 / DSM 1053 / JCM 10044 / NBRC 100330 / Delta H) (Methanobacterium thermoautotrophicum).